Reading from the N-terminus, the 357-residue chain is UPF0283 membrane protein BOV_0999 (357 aa).

The tract at residues 1-36 (MSDKTPRKPTAFRLEQPARVSAASEQEEPRRPRAVK) is disordered. Over residues 27–36 (EEPRRPRAVK) the composition is skewed to basic and acidic residues. 2 helical membrane-spanning segments follow: residues 78–98 (ILFGALGILVSFAIGIWTEDL) and 109–129 (LGWTALGVAMVALAAFAAIIL).

The protein belongs to the UPF0283 family.

The protein resides in the cell inner membrane. This Brucella ovis (strain ATCC 25840 / 63/290 / NCTC 10512) protein is UPF0283 membrane protein BOV_0999.